The sequence spans 196 residues: Large ribosomal subunit protein mL66 (196 aa).

The N-terminal 34 residues, 1 to 34, are a transit peptide targeting the mitochondrion; the sequence is MAALNVLVSGCGRFLRGLLTGPTVTSWARPPARG.

Belongs to the bacterial ribosomal protein bS18 family. Mitochondrion-specific ribosomal protein mL66 subfamily. In terms of assembly, component of the mitochondrial ribosome small subunit (28S) which comprises a 12S rRNA and about 30 distinct proteins.

It localises to the mitochondrion. The protein is Large ribosomal subunit protein mL66 (MRPS18A) of Bos taurus (Bovine).